The following is a 198-amino-acid chain: ATP-dependent Clp protease proteolytic subunit 1 (198 aa).

Ser98 (nucleophile) is an active-site residue. Residue His123 is part of the active site.

Belongs to the peptidase S14 family. Fourteen ClpP subunits assemble into 2 heptameric rings which stack back to back to give a disk-like structure with a central cavity, resembling the structure of eukaryotic proteasomes.

It is found in the cytoplasm. It catalyses the reaction Hydrolysis of proteins to small peptides in the presence of ATP and magnesium. alpha-casein is the usual test substrate. In the absence of ATP, only oligopeptides shorter than five residues are hydrolyzed (such as succinyl-Leu-Tyr-|-NHMec, and Leu-Tyr-Leu-|-Tyr-Trp, in which cleavage of the -Tyr-|-Leu- and -Tyr-|-Trp bonds also occurs).. Cleaves peptides in various proteins in a process that requires ATP hydrolysis. Has a chymotrypsin-like activity. Plays a major role in the degradation of misfolded proteins. ClpXP1 is involved in the complete degradation of the Site-2 clipped anti-sigma-W factor RsiW. This results in the release of SigW and the transcription activation of the genes under the control of the sigma-W factor. This is ATP-dependent Clp protease proteolytic subunit 1 from Bacillus licheniformis (strain ATCC 14580 / DSM 13 / JCM 2505 / CCUG 7422 / NBRC 12200 / NCIMB 9375 / NCTC 10341 / NRRL NRS-1264 / Gibson 46).